The following is a 169-amino-acid chain: ATP synthase subunit b (169 aa).

Residues 11-31 form a helical membrane-spanning segment; the sequence is IPSFIAQIVNFGLLLGLLYLF.

It belongs to the ATPase B chain family. F-type ATPases have 2 components, F(1) - the catalytic core - and F(0) - the membrane proton channel. F(1) has five subunits: alpha(3), beta(3), gamma(1), delta(1), epsilon(1). F(0) has three main subunits: a(1), b(2) and c(10-14). The alpha and beta chains form an alternating ring which encloses part of the gamma chain. F(1) is attached to F(0) by a central stalk formed by the gamma and epsilon chains, while a peripheral stalk is formed by the delta and b chains.

It is found in the cell membrane. Its function is as follows. F(1)F(0) ATP synthase produces ATP from ADP in the presence of a proton or sodium gradient. F-type ATPases consist of two structural domains, F(1) containing the extramembraneous catalytic core and F(0) containing the membrane proton channel, linked together by a central stalk and a peripheral stalk. During catalysis, ATP synthesis in the catalytic domain of F(1) is coupled via a rotary mechanism of the central stalk subunits to proton translocation. Functionally, component of the F(0) channel, it forms part of the peripheral stalk, linking F(1) to F(0). The chain is ATP synthase subunit b from Dehalococcoides mccartyi (strain ATCC BAA-2100 / JCM 16839 / KCTC 5957 / BAV1).